Consider the following 215-residue polypeptide: Nascent polypeptide-associated complex subunit alpha (215 aa).

Residues 1–81 (MPGEATETVP…SEKKARKAMS (81 aa)) are disordered. Over residues 9–28 (VPATEQELPQPQAETGSGTE) the composition is skewed to polar residues. Acidic residues predominate over residues 29–42 (SDSDESVPELEEQD). Residue S43 is modified to Phosphoserine; by ILK1. Over residues 44-57 (TQTATQQAQLAAAA) the composition is skewed to low complexity. A required for DNA-binding region spans residues 69-80 (QSRSEKKARKAM). The NAC-A/B domain maps to 70-135 (SRSEKKARKA…AKIEDLSQQA (66 aa)). The tract at residues 93-108 (RVTIRKSKNILFVITK) is RNA/DNA-binding. S132 is modified (phosphoserine). The residue at position 142 (K142) is an N6-acetyllysine; alternate. Residue K142 forms a Glycyl lysine isopeptide (Lys-Gly) (interchain with G-Cter in SUMO2); alternate linkage. The residue at position 159 (T159) is a Phosphothreonine; by GSK3-beta. A Phosphothreonine modification is found at T161. A phosphoserine mark is found at S166, S186, S191, and S203. Residues 176 to 213 (VEVKDIELVMSQANVSRAKAVRALKNNSNDIVNAIMEL) form the UBA domain.

This sequence belongs to the NAC-alpha family. Part of the nascent polypeptide-associated complex (NAC), which is a heterodimer of NACA and BTF3 (via NAC-A/B domains). NAC associates with ribosomes through the BTF3/NACB subunit and contacts the ribosomal protein L23, which is positioned near the exiting site. Both subunits can contact nascent polypeptide chains. NACA may also form homodimers, and only this form binds DNA. Interacts with TBP and JUN. Post-translationally, phosphorylation of Ser-43 by ILK during cell adhesion may promote nuclear localization. Phosphorylation of Thr-159 by GSK3B may promote proteasome mediated degradation. In terms of tissue distribution, isoform 1 appears to be ubiquitously expressed.

The protein resides in the cytoplasm. It is found in the nucleus. In terms of biological role, prevents inappropriate targeting of non-secretory polypeptides to the endoplasmic reticulum (ER). Binds to nascent polypeptide chains as they emerge from the ribosome and blocks their interaction with the signal recognition particle (SRP), which normally targets nascent secretory peptides to the ER. Also reduces the inherent affinity of ribosomes for protein translocation sites in the ER membrane (M sites). Isoform 1 and isoform 2 appear to bind DNA and play roles in transcription. Isoform 1 may function as a specific coactivator for JUN, acting to stabilize the interaction of JUN homodimers with promoter elements. In Mus musculus (Mouse), this protein is Nascent polypeptide-associated complex subunit alpha (Naca).